Consider the following 370-residue polypeptide: uncharacterized protein (370 aa).

An N-acetylmethionine modification is found at methionine 1.

Belongs to the ornithine cyclodeaminase/mu-crystallin family.

This is an uncharacterized protein from Saccharomyces cerevisiae (strain ATCC 204508 / S288c) (Baker's yeast).